A 499-amino-acid polypeptide reads, in one-letter code: Cobyric acid synthase (499 aa).

The GATase cobBQ-type domain occupies 246-441; the sequence is PIDIAIIKLP…IHGIFDGAEL (196 aa). Catalysis depends on Cys-327, which acts as the Nucleophile. His-433 is an active-site residue.

This sequence belongs to the CobB/CobQ family. CobQ subfamily.

It participates in cofactor biosynthesis; adenosylcobalamin biosynthesis. In terms of biological role, catalyzes amidations at positions B, D, E, and G on adenosylcobyrinic A,C-diamide. NH(2) groups are provided by glutamine, and one molecule of ATP is hydrogenolyzed for each amidation. The polypeptide is Cobyric acid synthase (Clostridium kluyveri (strain NBRC 12016)).